Consider the following 406-residue polypeptide: Peptidase T (406 aa).

His-82 lines the Zn(2+) pocket. The active site involves Asp-84. Zn(2+) is bound at residue Asp-142. Glu-176 (proton acceptor) is an active-site residue. Positions 177, 199, and 381 each coordinate Zn(2+).

This sequence belongs to the peptidase M20B family. Zn(2+) serves as cofactor.

Its subcellular location is the cytoplasm. It carries out the reaction Release of the N-terminal residue from a tripeptide.. Functionally, cleaves the N-terminal amino acid of tripeptides. In Streptococcus agalactiae serotype V (strain ATCC BAA-611 / 2603 V/R), this protein is Peptidase T.